The primary structure comprises 229 residues: Purine nucleoside phosphorylase BB_0467 (229 aa).

3 residues coordinate Zn(2+): His55, Cys91, and His108.

Belongs to the purine nucleoside phosphorylase YfiH/LACC1 family. In terms of assembly, homodimer. It depends on Cu(2+) as a cofactor. The cofactor is Zn(2+).

The enzyme catalyses adenosine + phosphate = alpha-D-ribose 1-phosphate + adenine. It catalyses the reaction S-methyl-5'-thioadenosine + phosphate = 5-(methylsulfanyl)-alpha-D-ribose 1-phosphate + adenine. The catalysed reaction is inosine + phosphate = alpha-D-ribose 1-phosphate + hypoxanthine. It carries out the reaction adenosine + H2O + H(+) = inosine + NH4(+). Purine nucleoside enzyme that catalyzes the phosphorolysis of adenosine and inosine nucleosides, yielding D-ribose 1-phosphate and the respective free bases, adenine and hypoxanthine. Also catalyzes the phosphorolysis of S-methyl-5'-thioadenosine into adenine and S-methyl-5-thio-alpha-D-ribose 1-phosphate. Also has adenosine deaminase activity. The protein is Purine nucleoside phosphorylase BB_0467 of Borreliella burgdorferi (strain ATCC 35210 / DSM 4680 / CIP 102532 / B31) (Borrelia burgdorferi).